Here is a 457-residue protein sequence, read N- to C-terminus: Argininosuccinate lyase (457 aa).

It belongs to the lyase 1 family. Argininosuccinate lyase subfamily.

It is found in the cytoplasm. The catalysed reaction is 2-(N(omega)-L-arginino)succinate = fumarate + L-arginine. Its pathway is amino-acid biosynthesis; L-arginine biosynthesis; L-arginine from L-ornithine and carbamoyl phosphate: step 3/3. This is Argininosuccinate lyase from Citrobacter koseri (strain ATCC BAA-895 / CDC 4225-83 / SGSC4696).